The following is a 147-amino-acid chain: Small ribosomal subunit protein eS19 (147 aa).

The protein belongs to the eukaryotic ribosomal protein eS19 family. As to quaternary structure, component of the small ribosomal subunit.

It is found in the cytoplasm. The protein localises to the nucleus. Component of the small ribosomal subunit. The ribosome is a large ribonucleoprotein complex responsible for the synthesis of proteins in the cell. Required for pre-rRNA processing and maturation of 40S ribosomal subunits. This Gillichthys mirabilis (Long-jawed mudsucker) protein is Small ribosomal subunit protein eS19 (rps19).